Here is a 282-residue protein sequence, read N- to C-terminus: Bis(5'-nucleosyl)-tetraphosphatase, symmetrical (282 aa).

It belongs to the Ap4A hydrolase family.

The catalysed reaction is P(1),P(4)-bis(5'-adenosyl) tetraphosphate + H2O = 2 ADP + 2 H(+). Functionally, hydrolyzes diadenosine 5',5'''-P1,P4-tetraphosphate to yield ADP. The chain is Bis(5'-nucleosyl)-tetraphosphatase, symmetrical from Escherichia fergusonii (strain ATCC 35469 / DSM 13698 / CCUG 18766 / IAM 14443 / JCM 21226 / LMG 7866 / NBRC 102419 / NCTC 12128 / CDC 0568-73).